The sequence spans 158 residues: Small ribosomal subunit protein uS15 (158 aa).

The span at 1-18 (MARMHARKRGKSGSKRPP) shows a compositional bias: basic residues. The interval 1-21 (MARMHARKRGKSGSKRPPRTA) is disordered.

Belongs to the universal ribosomal protein uS15 family. In terms of assembly, part of the 30S ribosomal subunit.

The chain is Small ribosomal subunit protein uS15 from Pyrococcus horikoshii (strain ATCC 700860 / DSM 12428 / JCM 9974 / NBRC 100139 / OT-3).